A 412-amino-acid polypeptide reads, in one-letter code: CinA-like protein (412 aa).

Belongs to the CinA family.

The polypeptide is CinA-like protein (Syntrophotalea carbinolica (strain DSM 2380 / NBRC 103641 / GraBd1) (Pelobacter carbinolicus)).